We begin with the raw amino-acid sequence, 272 residues long: Probable glutathione S-transferase DHAR2, chloroplastic (272 aa).

A chloroplast-targeting transit peptide spans 1–57; sequence MAVLLRTTTSATTATSGGSSSATALLATTFRRGGRRLLLLPATRGSAPRRAALLTAR. Lys-68 and Asp-79 together coordinate glutathione. Lys-68 and Asp-79 together coordinate L-ascorbate. The 79-residue stretch at 70–148 folds into the GST N-terminal domain; that stretch reads SLTVPDRLGD…AIEEKYPEPS (79 aa). Cys-80 acts as the Nucleophile in catalysis. Lys-107, Val-120, Ser-133, His-219, and Trp-266 together coordinate glutathione. Positions 126–272 constitute a GST C-terminal domain; sequence EEQWVADSDV…IAGWRPKVMG (147 aa). An L-ascorbate-binding site is contributed by Lys-269.

The protein belongs to the GST superfamily. DHAR family. Monomer.

The protein localises to the plastid. Its subcellular location is the chloroplast. It catalyses the reaction RX + glutathione = an S-substituted glutathione + a halide anion + H(+). The catalysed reaction is L-dehydroascorbate + 2 glutathione = glutathione disulfide + L-ascorbate. Its function is as follows. Involved in ascorbate homeostasis. Maintains redox pools of ascorbate by recycling dihydroascorbate (DHA) to ascorbate. Involved in scavenging reactive oxygen species (ROS) under oxidative stresses. The chain is Probable glutathione S-transferase DHAR2, chloroplastic from Oryza sativa subsp. japonica (Rice).